The primary structure comprises 252 residues: Deoxyuridine 5'-triphosphate nucleotidohydrolase, mitochondrial (252 aa).

The N-terminal 69 residues, 1-69 (MTPLCPRPAL…AGRLSQGCRG (69 aa)), are a transit peptide targeting the mitochondrion. Cys11, Ser88, and Ser99 each carry phosphoserine. A disordered region spans residues 78-104 (WKGELPKAGGSPAPGPETPAISPSKRA). Residues 173–175 (RSG), 187–193 (GVIDEDY), Gly198, Arg241, and 246–247 (FG) each bind dUTP.

Belongs to the dUTPase family. As to quaternary structure, homotrimer. Mg(2+) is required as a cofactor. Nuclear isoform 2 is phosphorylated in vivo on Ser-11, a reaction that can be catalyzed in vitro by CDC2. Phosphorylation in mature T-cells occurs in a cell cycle-dependent manner. Isoform 3 is not phosphorylated. As to expression, found in a variety of tissues. Isoform 3 expression is constitutive, while isoform 2 expression correlates with the onset of DNA replication (at protein level). Isoform 2 degradation coincides with the cessation of nuclear DNA replication (at protein level).

The protein resides in the nucleus. It is found in the mitochondrion. It carries out the reaction dUTP + H2O = dUMP + diphosphate + H(+). The protein operates within pyrimidine metabolism; dUMP biosynthesis; dUMP from dCTP (dUTP route): step 2/2. With respect to regulation, phosphorylation is necessary for activity. Catalyzes the cleavage of 2'-deoxyuridine 5'-triphosphate (dUTP) into 2'-deoxyuridine 5'-monophosphate (dUMP) and inorganic pyrophosphate and through its action efficiently prevents uracil misincorporation into DNA and at the same time provides dUMP, the substrate for de novo thymidylate biosynthesis. Inhibits peroxisome proliferator-activated receptor (PPAR) activity by binding of its N-terminal to PPAR, preventing the latter's dimerization with retinoid X receptor. Essential for embryonic development. In Homo sapiens (Human), this protein is Deoxyuridine 5'-triphosphate nucleotidohydrolase, mitochondrial (DUT).